We begin with the raw amino-acid sequence, 185 residues long: Elongation factor P (185 aa).

It belongs to the elongation factor P family.

Its subcellular location is the cytoplasm. It participates in protein biosynthesis; polypeptide chain elongation. Functionally, involved in peptide bond synthesis. Stimulates efficient translation and peptide-bond synthesis on native or reconstituted 70S ribosomes in vitro. Probably functions indirectly by altering the affinity of the ribosome for aminoacyl-tRNA, thus increasing their reactivity as acceptors for peptidyl transferase. This chain is Elongation factor P, found in Dictyoglomus thermophilum (strain ATCC 35947 / DSM 3960 / H-6-12).